Consider the following 335-residue polypeptide: UPF0065 protein BB4329 (335 aa).

An N-terminal signal peptide occupies residues 1–39 (MNKNIPAFHRRCHGLVQGLARTLLLAPVLLALSVPAAQA).

This sequence belongs to the UPF0065 (bug) family.

The protein resides in the periplasm. This is UPF0065 protein BB4329 from Bordetella bronchiseptica (strain ATCC BAA-588 / NCTC 13252 / RB50) (Alcaligenes bronchisepticus).